A 201-amino-acid chain; its full sequence is Recombination protein RecR (201 aa).

The C4-type zinc-finger motif lies at 57–72 (CKSCRTFTEEDECAIC). Residues 81 to 176 (GQLCVVEMPA…KVTRIAHGIP (96 aa)) form the Toprim domain.

The protein belongs to the RecR family.

May play a role in DNA repair. It seems to be involved in an RecBC-independent recombinational process of DNA repair. It may act with RecF and RecO. The polypeptide is Recombination protein RecR (Glaesserella parasuis serovar 5 (strain SH0165) (Haemophilus parasuis)).